The following is a 339-amino-acid chain: Fructose-1,6-bisphosphatase class 1 (339 aa).

Residues Glu94, Asp116, Leu118, and Asp119 each coordinate Mg(2+). Residues 119-122, Asn210, and Lys276 each bind substrate; that span reads DGSS. Glu282 serves as a coordination point for Mg(2+).

This sequence belongs to the FBPase class 1 family. As to quaternary structure, homotetramer. Mg(2+) serves as cofactor.

The protein resides in the cytoplasm. It catalyses the reaction beta-D-fructose 1,6-bisphosphate + H2O = beta-D-fructose 6-phosphate + phosphate. It participates in carbohydrate biosynthesis; gluconeogenesis. This is Fructose-1,6-bisphosphatase class 1 from Burkholderia ambifaria (strain ATCC BAA-244 / DSM 16087 / CCUG 44356 / LMG 19182 / AMMD) (Burkholderia cepacia (strain AMMD)).